Here is a 214-residue protein sequence, read N- to C-terminus: Adenylate kinase (214 aa).

An ATP-binding site is contributed by 10 to 15 (GAGKGT). Positions 30–59 (STGDMLRAAVKAGTPLGLEAKKVMDAGQLV) are NMP. Residues Thr-31, Arg-36, 57 to 59 (QLV), 85 to 88 (GFPR), and Gln-92 contribute to the AMP site. The tract at residues 122-159 (GRRVHSGSGRVYHVVFNPPKVEGKDDVTGEDLSIRPDD) is LID. ATP is bound by residues Arg-123 and 132–133 (VY). Arg-156 and Arg-167 together coordinate AMP. Gln-200 lines the ATP pocket.

This sequence belongs to the adenylate kinase family. As to quaternary structure, monomer.

It is found in the cytoplasm. The catalysed reaction is AMP + ATP = 2 ADP. It functions in the pathway purine metabolism; AMP biosynthesis via salvage pathway; AMP from ADP: step 1/1. Functionally, catalyzes the reversible transfer of the terminal phosphate group between ATP and AMP. Plays an important role in cellular energy homeostasis and in adenine nucleotide metabolism. The protein is Adenylate kinase of Shewanella denitrificans (strain OS217 / ATCC BAA-1090 / DSM 15013).